A 426-amino-acid polypeptide reads, in one-letter code: MINKKLARSFSLYEWLYYLDHFMLDNIDPTLNRVFYVAKKLGVLKSKAFVFIVGGTNGKGSTCHVLENLLLNSGYRVGLYTSPHLMRYTERVRINGFELEHLYHISAFNDVKYFQNDVLLTRFEFITLSALILFKSYNLDIIILEVGLGGRLDATNILSADVSVITNIDIDHSKILGVNRSSISVEKSGIFRKNKIAIVADNNFPKVAQYLAKKKKVRLRIVNIDWIYKKIEFEWSFCSSKITWLHLPLPRNVSLDSVATALSAVSESGIKINQKVFRSCISEITLCGRFETISYNPIIILDVAHNPHSARYLFKKMSSFKKNGNIFAVVGILKEKNIKDIVSPLIPIVDYWYCITLLTHRSATSSEIIKYLPNHNSQISKNMTVALEKIFDKVTNNDIVLIFGSFITVCEANKFLANKVKNFKLL.

58 to 61 lines the ATP pocket; it reads GKGS. Residue serine 82 participates in Mg(2+) binding. Residue 121–124 coordinates 7,8-dihydropteroate; sequence TRFE. Glutamate 145 provides a ligand contact to Mg(2+). 7,8-dihydropteroate is bound at residue 152–154; sequence LDA. Position 172 (histidine 172) interacts with Mg(2+). ATP contacts are provided by arginine 289 and aspartate 302.

This sequence belongs to the folylpolyglutamate synthase family. Monomer. The cofactor is Mg(2+).

It carries out the reaction 7,8-dihydropteroate + L-glutamate + ATP = 7,8-dihydrofolate + ADP + phosphate + H(+). The catalysed reaction is (6S)-5,6,7,8-tetrahydrofolyl-(gamma-L-Glu)(n) + L-glutamate + ATP = (6S)-5,6,7,8-tetrahydrofolyl-(gamma-L-Glu)(n+1) + ADP + phosphate + H(+). The enzyme catalyses 10-formyltetrahydrofolyl-(gamma-L-Glu)(n) + L-glutamate + ATP = 10-formyltetrahydrofolyl-(gamma-L-Glu)(n+1) + ADP + phosphate + H(+). It catalyses the reaction (6R)-5,10-methylenetetrahydrofolyl-(gamma-L-Glu)(n) + L-glutamate + ATP = (6R)-5,10-methylenetetrahydrofolyl-(gamma-L-Glu)(n+1) + ADP + phosphate + H(+). It participates in cofactor biosynthesis; tetrahydrofolate biosynthesis; 7,8-dihydrofolate from 2-amino-4-hydroxy-6-hydroxymethyl-7,8-dihydropteridine diphosphate and 4-aminobenzoate: step 2/2. The protein operates within cofactor biosynthesis; tetrahydrofolylpolyglutamate biosynthesis. In terms of biological role, functions in two distinct reactions of the de novo folate biosynthetic pathway. Catalyzes the addition of a glutamate residue to dihydropteroate (7,8-dihydropteroate or H2Pte) to form dihydrofolate (7,8-dihydrofolate monoglutamate or H2Pte-Glu). Also catalyzes successive additions of L-glutamate to tetrahydrofolate or 10-formyltetrahydrofolate or 5,10-methylenetetrahydrofolate, leading to folylpolyglutamate derivatives. The protein is Dihydrofolate synthase/folylpolyglutamate synthase (folC) of Buchnera aphidicola subsp. Baizongia pistaciae (strain Bp).